Reading from the N-terminus, the 729-residue chain is Neurochondrin (729 aa).

S2 is subject to N-acetylserine. Position 2 is a phosphoserine (S2). Residues C3 and C4 are each lipidated (S-palmitoyl cysteine). An Asymmetric dimethylarginine modification is found at R75. Position 448 is a phosphoserine (S448).

This sequence belongs to the neurochondrin family. Interacts with MCHR1. Interacts with SEMA4C. Interacts with DIAPH1 (via FH3 domain). Interacts with GRM5. Post-translationally, palmitoylated. Palmitoylation by ZDHHC1, ZDHHC3 and ZDHHC11 regulates the association of NCDN with endosome membranes. May also be palmitoylated by ZDHHC7. As to expression, expressed in brain and in peripheral nervous system (at protein level). Weakly expressed in neurites.

It localises to the cytoplasm. It is found in the cytosol. The protein localises to the endosome membrane. The protein resides in the cell projection. Its subcellular location is the dendrite. It localises to the postsynapse. Its function is as follows. Probably involved in signal transduction, in the nervous system, via increasing cell surface localization of GRM5 and positively regulating its signaling. Required for the spatial learning process. Acts as a negative regulator of Ca(2+)-calmodulin-dependent protein kinase 2 (CaMK2) phosphorylation. May play a role in modulating melanin-concentrating hormone-mediated functions via its interaction with MCHR1 that interferes with G protein-coupled signal transduction. May be involved in bone metabolism. May also be involved in neurite outgrowth. The polypeptide is Neurochondrin (Ncdn) (Rattus norvegicus (Rat)).